A 172-amino-acid chain; its full sequence is Putative acetyltransferase YvoF (172 aa).

Belongs to the transferase hexapeptide repeat family.

The polypeptide is Putative acetyltransferase YvoF (yvoF) (Bacillus subtilis (strain 168)).